Reading from the N-terminus, the 29-residue chain is Lambda-theraphotoxin-Ec2c (29 aa).

Intrachain disulfides connect Cys2–Cys16, Cys9–Cys21, and Cys15–Cys25.

It belongs to the neurotoxin 30 (phrixotoxin) family. Expressed by the venom gland.

It localises to the secreted. Its function is as follows. Both insecticidal and vertebrate neurotoxin that potently blocks insect calcium-activated potassium (BKCa) channels (Slo-type) in cockroach dorsal unpaired median (DUM) neurons (IC(50)=24.6 nM). This occurs in the absence of any shifts in the voltage dependence of activation. May interact with the turret and/or loop region of the external entrance to the channel and does not project deeply into the pore of the channel. Also shows toxicity to mice by introcerebroventicular injection. The sequence is that of Lambda-theraphotoxin-Ec2c from Eucratoscelus constrictus (African red-rump baboon spider).